Consider the following 648-residue polypeptide: Acetyl-coenzyme A synthetase (648 aa).

Residues 191-194, Thr-310, and Asn-334 contribute to the CoA site; that span reads RGGR. Residues 386-388, 410-415, Asp-499, and Arg-514 each bind ATP; these read GEP and DTWWQT. Residue Ser-522 participates in CoA binding. Arg-525 contacts ATP. The Mg(2+) site is built by Val-536, His-538, and Ile-541. Arg-583 lines the CoA pocket. Lys-608 carries the post-translational modification N6-acetyllysine.

The protein belongs to the ATP-dependent AMP-binding enzyme family. Mg(2+) is required as a cofactor. Post-translationally, acetylated. Deacetylation by the SIR2-homolog deacetylase activates the enzyme.

The catalysed reaction is acetate + ATP + CoA = acetyl-CoA + AMP + diphosphate. Functionally, catalyzes the conversion of acetate into acetyl-CoA (AcCoA), an essential intermediate at the junction of anabolic and catabolic pathways. AcsA undergoes a two-step reaction. In the first half reaction, AcsA combines acetate with ATP to form acetyl-adenylate (AcAMP) intermediate. In the second half reaction, it can then transfer the acetyl group from AcAMP to the sulfhydryl group of CoA, forming the product AcCoA. This Aeromonas hydrophila subsp. hydrophila (strain ATCC 7966 / DSM 30187 / BCRC 13018 / CCUG 14551 / JCM 1027 / KCTC 2358 / NCIMB 9240 / NCTC 8049) protein is Acetyl-coenzyme A synthetase.